The following is a 214-amino-acid chain: Transcriptional regulatory protein MctR (214 aa).

A Response regulatory domain is found at 8 to 124 (RVLLIDNHPL…EIVSAIETVA (117 aa)). 4-aspartylphosphate is present on Asp59. The region spanning 143–208 (VEEGSDPLTP…GLIRYALDHG (66 aa)) is the HTH luxR-type domain. Residues 167-186 (NKEIAETLGITSATAETHRK) constitute a DNA-binding region (H-T-H motif).

The protein localises to the cytoplasm. Functionally, member of the two-component regulatory system MctS/MctR, which activates mctP expression. This chain is Transcriptional regulatory protein MctR, found in Rhizobium johnstonii (strain DSM 114642 / LMG 32736 / 3841) (Rhizobium leguminosarum bv. viciae).